The primary structure comprises 275 residues: Chemotaxis protein methyltransferase 1 (275 aa).

The CheR-type methyltransferase domain occupies 1 to 275 (MTAITISDQE…CNPGIIYKLK (275 aa)). Residues N76, T78, R82, E117, D145, 201-202 (NL), and 218-219 (RN) each bind S-adenosyl-L-methionine.

The catalysed reaction is L-glutamyl-[protein] + S-adenosyl-L-methionine = [protein]-L-glutamate 5-O-methyl ester + S-adenosyl-L-homocysteine. Functionally, methylation of the membrane-bound methyl-accepting chemotaxis proteins (MCP) to form gamma-glutamyl methyl ester residues in MCP. The polypeptide is Chemotaxis protein methyltransferase 1 (cheR1) (Vibrio cholerae serotype O1 (strain ATCC 39315 / El Tor Inaba N16961)).